The primary structure comprises 434 residues: Histidinol dehydrogenase (434 aa).

NAD(+) contacts are provided by Tyr-130, Gln-191, and Asn-214. 3 residues coordinate substrate: Ser-237, Gln-259, and His-262. Zn(2+)-binding residues include Gln-259 and His-262. Residues Glu-328 and His-329 each act as proton acceptor in the active site. Substrate contacts are provided by His-329, Asp-362, Glu-416, and His-421. Zn(2+) is bound at residue Asp-362. His-421 lines the Zn(2+) pocket.

It belongs to the histidinol dehydrogenase family. Requires Zn(2+) as cofactor.

It carries out the reaction L-histidinol + 2 NAD(+) + H2O = L-histidine + 2 NADH + 3 H(+). The protein operates within amino-acid biosynthesis; L-histidine biosynthesis; L-histidine from 5-phospho-alpha-D-ribose 1-diphosphate: step 9/9. Functionally, catalyzes the sequential NAD-dependent oxidations of L-histidinol to L-histidinaldehyde and then to L-histidine. The chain is Histidinol dehydrogenase from Rhodospirillum rubrum (strain ATCC 11170 / ATH 1.1.1 / DSM 467 / LMG 4362 / NCIMB 8255 / S1).